A 938-amino-acid polypeptide reads, in one-letter code: Glutamate receptor ionotropic, NMDA 1 (938 aa).

The N-terminal stretch at 1–18 (MSTMHLLTFALLFSCSFA) is a signal peptide. Residues 19–559 (RAACDPKIVN…TLDSFMQPFQ (541 aa)) are Extracellular-facing. 10 N-linked (GlcNAc...) asparagine glycosylation sites follow: N61, N203, N239, N276, N300, N350, N368, N440, N471, and N491. An intrachain disulfide couples C79 to C308. 2 disulfides stabilise this stretch: C420/C454 and C436/C455. 3 residues coordinate glycine: P516, T518, and R523. A helical membrane pass occupies residues 560–580 (STLWLLVGLSVHVVAVMLYLL). Residues 581–602 (DRFSPFGRFKVNSEEEEEDALT) lie on the Cytoplasmic side of the membrane. Positions 603–624 (LSSAMWFSWGVLLNSGIGEGAP) form an intramembrane region, discontinuously helical. The tract at residues 603-624 (LSSAMWFSWGVLLNSGIGEGAP) is pore-forming. Over 625 to 630 (RSFSAR) the chain is Cytoplasmic. The helical transmembrane segment at 631–647 (ILGMVWAGFAMIIVASY) threads the bilayer. Residues 648-812 (TANLAAFLVL…NAPATLTFEN (165 aa)) are Extracellular-facing. N674 carries an N-linked (GlcNAc...) asparagine glycan. 2 residues coordinate glycine: S688 and D732. Cysteines 744 and 798 form a disulfide. N771 is a glycosylation site (N-linked (GlcNAc...) asparagine). A helical transmembrane segment spans residues 813–833 (MAGVFMLVAGGIVAGIFLIFI). The Cytoplasmic portion of the chain corresponds to 834–938 (EIAYKRHKDA…LQLCSRHRES (105 aa)). S889 is modified (phosphoserine; by PKC). Residues 889-938 (SSFKRRRSSKDTSTGGGRGALQNQKDTVLPRRAIEREEGQLQLCSRHRES) form a disordered region. S890 is modified (phosphoserine). Phosphoserine; by PKC is present on residues S896 and S897. A compositionally biased stretch (basic and acidic residues) spans 916–927 (VLPRRAIEREEG).

It belongs to the glutamate-gated ion channel (TC 1.A.10.1) family. NR1/GRIN1 subfamily. As to quaternary structure, heterotetramer; the NMDAR subunits are modular and harbor tiered domains that function in concert to regulate opening and closing of the cation-selective ion channel pore. Forms heterotetrameric channels composed of two GluN1/zeta subunits (GRIN1), and two identical GluN2/epsilon subunits (GRIN2A, GRIN2B, GRIN2C or GRIN2D) or GluN3 subunits (GRIN3A or GRIN3B) (in vitro). Can also form heterotetrameric channels that contain at least two GluN1 subunits and at least two different GluN2 subunits (or a combination of one GluN2 and one GluN3 subunits) (in vitro). In vivo, the subunit composition may vary in function of the expression levels of the different subunits. Found in a complex with GRIN2A or GRIN2B, GRIN3A and PPP2CB. Found in a complex with GRIN2A or GRIN2B and GRIN3B. Interacts with SNX27 (via PDZ domain); the interaction is required for recycling to the plasma membrane when endocytosed and prevent degradation in lysosomes. Interacts with DLG4 and MPDZ. Interacts with LRFN1 and LRFN2. Interacts with MYZAP. Found in a complex with DLG4 and PRR7. Found in a complex with GRIN2B and PRR7. Interacts with PRR7; the interaction is reduced following NMDA receptor activity. Post-translationally, NMDA is probably regulated by C-terminal phosphorylation of an isoform of GRIN1 by PKC. Dephosphorylated on Ser-897 probably by protein phosphatase 2A (PPP2CB). Its phosphorylated state is influenced by the formation of the NMDAR-PPP2CB complex and the NMDAR channel activity. Detected in brain (at protein level). Detected in brain.

It localises to the cell membrane. The protein resides in the postsynaptic cell membrane. Its subcellular location is the postsynaptic density membrane. The protein localises to the synaptic cell membrane. It catalyses the reaction Ca(2+)(in) = Ca(2+)(out). The catalysed reaction is Na(+)(in) = Na(+)(out). The enzyme catalyses K(+)(in) = K(+)(out). In terms of biological role, component of N-methyl-D-aspartate (NMDA) receptors (NMDARs) that function as heterotetrameric, ligand-gated cation channels with high calcium permeability and voltage-dependent block by Mg(2+). NMDARs participate in synaptic plasticity for learning and memory formation by contributing to the long-term potentiation (LTP). Channel activation requires binding of the neurotransmitter L-glutamate to the GluN2 subunit, glycine or D-serine binding to the GluN1 subunit, plus membrane depolarization to eliminate channel inhibition by Mg(2+). NMDARs mediate simultaneously the potasium efflux and the influx of calcium and sodium. Each GluN2 or GluN3 subunit confers differential attributes to channel properties, including activation, deactivation and desensitization kinetics, pH sensitivity, Ca2(+) permeability, and binding to allosteric modulators. The protein is Glutamate receptor ionotropic, NMDA 1 of Mus musculus (Mouse).